A 256-amino-acid chain; its full sequence is Trans-aconitate 2-methyltransferase (256 aa).

This sequence belongs to the methyltransferase superfamily. Tam family.

The protein localises to the cytoplasm. The catalysed reaction is trans-aconitate + S-adenosyl-L-methionine = (E)-3-(methoxycarbonyl)pent-2-enedioate + S-adenosyl-L-homocysteine. Functionally, catalyzes the S-adenosylmethionine monomethyl esterification of trans-aconitate. The protein is Trans-aconitate 2-methyltransferase of Afipia carboxidovorans (strain ATCC 49405 / DSM 1227 / KCTC 32145 / OM5) (Oligotropha carboxidovorans).